Consider the following 211-residue polypeptide: Thiamine-phosphate synthase (211 aa).

Residues 37–41 (QLRIK) and Asn-69 contribute to the 4-amino-2-methyl-5-(diphosphooxymethyl)pyrimidine site. Mg(2+) is bound by residues Asp-70 and Asp-89. Ser-108 contributes to the 4-amino-2-methyl-5-(diphosphooxymethyl)pyrimidine binding site. Residue 134–136 (TQT) participates in 2-[(2R,5Z)-2-carboxy-4-methylthiazol-5(2H)-ylidene]ethyl phosphate binding. Lys-137 lines the 4-amino-2-methyl-5-(diphosphooxymethyl)pyrimidine pocket. 2-[(2R,5Z)-2-carboxy-4-methylthiazol-5(2H)-ylidene]ethyl phosphate contacts are provided by residues Gly-166 and 186 to 187 (VS).

Belongs to the thiamine-phosphate synthase family. Mg(2+) is required as a cofactor.

The catalysed reaction is 2-[(2R,5Z)-2-carboxy-4-methylthiazol-5(2H)-ylidene]ethyl phosphate + 4-amino-2-methyl-5-(diphosphooxymethyl)pyrimidine + 2 H(+) = thiamine phosphate + CO2 + diphosphate. It catalyses the reaction 2-(2-carboxy-4-methylthiazol-5-yl)ethyl phosphate + 4-amino-2-methyl-5-(diphosphooxymethyl)pyrimidine + 2 H(+) = thiamine phosphate + CO2 + diphosphate. The enzyme catalyses 4-methyl-5-(2-phosphooxyethyl)-thiazole + 4-amino-2-methyl-5-(diphosphooxymethyl)pyrimidine + H(+) = thiamine phosphate + diphosphate. It functions in the pathway cofactor biosynthesis; thiamine diphosphate biosynthesis; thiamine phosphate from 4-amino-2-methyl-5-diphosphomethylpyrimidine and 4-methyl-5-(2-phosphoethyl)-thiazole: step 1/1. Its function is as follows. Condenses 4-methyl-5-(beta-hydroxyethyl)thiazole monophosphate (THZ-P) and 2-methyl-4-amino-5-hydroxymethyl pyrimidine pyrophosphate (HMP-PP) to form thiamine monophosphate (TMP). The protein is Thiamine-phosphate synthase of Escherichia coli O1:K1 / APEC.